The chain runs to 335 residues: uncharacterized protein (335 aa).

Disordered stretches follow at residues 153–174, 218–239, and 254–295; these read LNDKEDEEKLDQTTESEESDRI, HTSVRRSMSSVSSSASSTQEEV, and RCKV…PVTS. Acidic residues predominate over residues 156–170; the sequence is KEDEEKLDQTTESEE. 2 stretches are compositionally biased toward low complexity: residues 222–234 and 275–295; these read RRSMSSVSSSASS and THTSVSSLSVHSVSPTPPVTS.

This is an uncharacterized protein from Caenorhabditis elegans.